The primary structure comprises 505 residues: MSVVILDFGSQFTRLIARRLRELGAYSVILPGTASLERIAQENPQGIVLSGGPSSVYDANAPRPAPGVLDLDVPILGVCYGMQFLAHEAGGAVQRAGKREYGKADLTRYGGQLFAGIQGEFVAWMSHSDSVTQLPQGYEVIAATEDTPVAGIENTVTRRYGVQFHPEVVHTPKGGQLLANFLEICGVARDWNAEHIVDELIEDVRRQVGAGRVLLAISGGVDSSTLGLLLARAIGDRLTAVFIDHGLLRLGEREQVEAALRPLGVNLVTVDASEEFLGALAGVSDPEQKRKIIGREFIRAFEREARKYGPFDFLAQGTLYPDVIESAGGEGAANIKSHHNVGGLPEDLAFKLVEPFRTLFKDEVREIARLLGLPDAIRMRHPFPGPGLAIRCLGEVTREKLDILKRVDDIFISGLREFGLYDGCSQALAVLTPIQSVGVMGDERTYSYTAALRAVTTDDFMTAEWARLPYEFLATMSNRIVNQVHEINRVVYDITGKPPATIEWE.

In terms of domain architecture, Glutamine amidotransferase type-1 spans 2-190 (SVVILDFGSQ…FLEICGVARD (189 aa)). Catalysis depends on C79, which acts as the Nucleophile. Catalysis depends on residues H165 and E167. Residues 191-380 (WNAEHIVDEL…LGLPDAIRMR (190 aa)) enclose the GMPS ATP-PPase domain. Position 218 to 224 (218 to 224 (SGGVDSS)) interacts with ATP.

In terms of assembly, homodimer.

The catalysed reaction is XMP + L-glutamine + ATP + H2O = GMP + L-glutamate + AMP + diphosphate + 2 H(+). It participates in purine metabolism; GMP biosynthesis; GMP from XMP (L-Gln route): step 1/1. Functionally, catalyzes the synthesis of GMP from XMP. This Deinococcus geothermalis (strain DSM 11300 / CIP 105573 / AG-3a) protein is GMP synthase [glutamine-hydrolyzing].